The primary structure comprises 150 residues: Cyclin-dependent kinases regulatory subunit (150 aa).

Over residues 115-137 (AAAQQQQQQQQQQQQQQQQHQTQ) the composition is skewed to low complexity. Positions 115–150 (AAAQQQQQQQQQQQQQQQQHQTQSISNDMQVPPQIS) are disordered.

This sequence belongs to the CKS family. As to quaternary structure, forms a stable but non-covalent complex with the CDC28 protein and with a cyclin.

Functionally, binds to the catalytic subunit of the cyclin dependent kinase (CDC28) and is essential for its biological function. This Saccharomyces cerevisiae (strain ATCC 204508 / S288c) (Baker's yeast) protein is Cyclin-dependent kinases regulatory subunit.